A 194-amino-acid chain; its full sequence is Protein phosphatase 1 regulatory subunit 1B (194 aa).

At methionine 1 the chain carries N-acetylmethionine. Residues methionine 1–proline 194 are disordered. Threonine 34 carries the post-translational modification Phosphothreonine; by PKA. Basic and acidic residues predominate over residues valine 41–histidine 63. Residues serine 45 and serine 46 each carry the phosphoserine modification. Residue threonine 75 is modified to Phosphothreonine. Over residues histidine 84–glutamine 95 the composition is skewed to polar residues. Residues serine 97 and serine 130 each carry the phosphoserine modification. Acidic residues predominate over residues glutamine 113–glutamine 131. Residues proline 160–asparagine 170 show a composition bias toward basic and acidic residues. Serine 192 bears the Phosphoserine mark.

The protein belongs to the protein phosphatase inhibitor 1 family. Dopamine- and cyclic AMP-regulated neuronal phosphoprotein. Post-translationally, phosphorylation of Thr-34 is required for activity.

It localises to the cytoplasm. Its function is as follows. Inhibitor of protein-phosphatase 1. The protein is Protein phosphatase 1 regulatory subunit 1B (Ppp1r1b) of Mus musculus (Mouse).